We begin with the raw amino-acid sequence, 345 residues long: Isopentenyl-diphosphate delta-isomerase (345 aa).

Position 6 to 7 (6 to 7 (RK)) interacts with substrate. FMN contacts are provided by residues 63-65 (SMT), serine 93, and asparagine 122. 93–95 (SQR) contributes to the substrate binding site. Glutamine 156 provides a ligand contact to substrate. Residue glutamate 157 coordinates Mg(2+). FMN is bound by residues lysine 188, threonine 218, 265–267 (GLR), and 286–287 (AL).

The protein belongs to the IPP isomerase type 2 family. Homooctamer. Dimer of tetramers. It depends on FMN as a cofactor. The cofactor is NADPH. Requires Mg(2+) as cofactor.

It localises to the cytoplasm. It carries out the reaction isopentenyl diphosphate = dimethylallyl diphosphate. Functionally, involved in the biosynthesis of isoprenoids. Catalyzes the 1,3-allylic rearrangement of the homoallylic substrate isopentenyl (IPP) to its allylic isomer, dimethylallyl diphosphate (DMAPP). The protein is Isopentenyl-diphosphate delta-isomerase of Archaeoglobus fulgidus (strain ATCC 49558 / DSM 4304 / JCM 9628 / NBRC 100126 / VC-16).